A 299-amino-acid chain; its full sequence is Protein NSG2 (299 aa).

Over 1–108 (MANRGEPDPK…PSRTRQTRQN (108 aa)) the chain is Cytoplasmic. Ser-90 is modified (phosphoserine). A helical transmembrane segment spans residues 109–129 (ILHYLQAVLILSLSGFAYHEL). The Lumenal portion of the chain corresponds to 130 to 161 (SRNLHDNHLLHPDFASRPLLLGVKLCNWLSNG). The chain crosses the membrane as a helical span at residues 162–182 (VLPNWLGYGVEGLLFGSVVPI). Residues 183–237 (LDNIFQTEVVKSSVHHDSLTSVIRSINAMLGVTFGIRKIQWNSSLQAAGAWGLLN) lie on the Cytoplasmic side of the membrane. Residues 238 to 258 (IILWLFFDGSISMLMSCICIG) traverse the membrane as a helical segment. At 259–268 (VGCCISCYKD) the chain is on the lumenal side. The helical transmembrane segment at 269-289 (IIDGSQFLYFMDFYFLGSLMF) threads the bilayer. The Cytoplasmic portion of the chain corresponds to 290–299 (GKLGRYLYSH).

This sequence belongs to the INSIG family.

The protein localises to the endoplasmic reticulum membrane. Its function is as follows. Stabilizes the HMG-CoA reductase HMG2 by preventing its HRD1-dependent degradation. Binds directly to the sterol-sensing domain (SSD)-containing transmembrane region of HMG2, promoting its folding to protect it from degradation. The polypeptide is Protein NSG2 (NSG2) (Saccharomyces cerevisiae (strain ATCC 204508 / S288c) (Baker's yeast)).